We begin with the raw amino-acid sequence, 209 residues long: FAS-associated death domain protein (209 aa).

One can recognise a DED domain in the interval 3-81; the sequence is PFLVLLHSVS…RKDLLLRLDD (79 aa). The region spanning 97 to 181 is the Death domain; sequence LRAAMEIICD…VVADLIEEDQ (85 aa). The span at 187-200 shows a compositional bias: polar residues; that stretch reads QSGSANPGSFTAWD. A disordered region spans residues 187–209; sequence QSGSANPGSFTAWDSGSAAPGAS.

As to quaternary structure, can self-associate. Component of the AIM2 PANoptosome complex, a multiprotein complex that drives inflammatory cell death (PANoptosis). Component of the death-induced signaling complex (DISC) composed of cell surface receptor FAS/CD95 or TNFRSF1A, adapter protein FADD and the CASP8 protease; recruitment of CASP8 to the complex is required for processing of CASP8 into the p18 and p10 subunits. Interacts (via death domain) with FAS (via death domain). Interacts directly (via DED domain) with NOL3 (via CARD domain); inhibits death-inducing signaling complex (DISC) assembly by inhibiting the increase in FAS-FADD binding induced by FAS activation. Interacts with CFLAR, PEA15 and MBD4. When phosphorylated, part of a complex containing HIPK3 and FAS. May interact with MAVS/IPS1. Interacts with MOCV v-CFLAR protein and PIDD1. Interacts with RIPK1 and TRADD. Interacts with stimulated TNFRSF10B. Interacts with DDX24. In terms of processing, phosphorylated.

It is found in the cytoplasm. Its function is as follows. Apoptotic adapter molecule that recruits caspases CASP8 or CASP10 to the activated FAS/CD95 or TNFRSF1A/TNFR-1 receptors. The resulting aggregate called the death-inducing signaling complex (DISC) performs CASP8 proteolytic activation. Active CASP8 initiates the subsequent cascade of caspases mediating apoptosis. Involved in interferon-mediated antiviral immune response, playing a role in the positive regulation of interferon signaling. This Bos taurus (Bovine) protein is FAS-associated death domain protein.